We begin with the raw amino-acid sequence, 460 residues long: Bifunctional protein GlmU (460 aa).

The pyrophosphorylase stretch occupies residues 1 to 229 (MSKLNIVVLA…VWETTGVNSK (229 aa)). Residues 9–12 (LAAG), Lys-23, Gln-74, 79–80 (GT), 101–103 (YGD), Gly-138, Glu-154, Asn-169, and Asn-227 each bind UDP-N-acetyl-alpha-D-glucosamine. Asp-103 is a binding site for Mg(2+). Residue Asn-227 coordinates Mg(2+). The tract at residues 230 to 250 (VQLAGLERIYQTAQANKLLEQ) is linker. Residues 251–460 (GVALADPARI…RPVKKPKPKN (210 aa)) are N-acetyltransferase. Positions 333 and 351 each coordinate UDP-N-acetyl-alpha-D-glucosamine. Residue His-363 is the Proton acceptor of the active site. Tyr-366 and Asn-377 together coordinate UDP-N-acetyl-alpha-D-glucosamine. Acetyl-CoA is bound by residues Ala-380, 386 to 387 (NY), Ser-405, Ala-423, and Arg-440.

In the N-terminal section; belongs to the N-acetylglucosamine-1-phosphate uridyltransferase family. This sequence in the C-terminal section; belongs to the transferase hexapeptide repeat family. Homotrimer. Requires Mg(2+) as cofactor.

Its subcellular location is the cytoplasm. It catalyses the reaction alpha-D-glucosamine 1-phosphate + acetyl-CoA = N-acetyl-alpha-D-glucosamine 1-phosphate + CoA + H(+). It carries out the reaction N-acetyl-alpha-D-glucosamine 1-phosphate + UTP + H(+) = UDP-N-acetyl-alpha-D-glucosamine + diphosphate. Its pathway is nucleotide-sugar biosynthesis; UDP-N-acetyl-alpha-D-glucosamine biosynthesis; N-acetyl-alpha-D-glucosamine 1-phosphate from alpha-D-glucosamine 6-phosphate (route II): step 2/2. It functions in the pathway nucleotide-sugar biosynthesis; UDP-N-acetyl-alpha-D-glucosamine biosynthesis; UDP-N-acetyl-alpha-D-glucosamine from N-acetyl-alpha-D-glucosamine 1-phosphate: step 1/1. It participates in bacterial outer membrane biogenesis; LPS lipid A biosynthesis. Functionally, catalyzes the last two sequential reactions in the de novo biosynthetic pathway for UDP-N-acetylglucosamine (UDP-GlcNAc). The C-terminal domain catalyzes the transfer of acetyl group from acetyl coenzyme A to glucosamine-1-phosphate (GlcN-1-P) to produce N-acetylglucosamine-1-phosphate (GlcNAc-1-P), which is converted into UDP-GlcNAc by the transfer of uridine 5-monophosphate (from uridine 5-triphosphate), a reaction catalyzed by the N-terminal domain. This is Bifunctional protein GlmU from Nitrosospira multiformis (strain ATCC 25196 / NCIMB 11849 / C 71).